Here is a 563-residue protein sequence, read N- to C-terminus: ATP-dependent RNA helicase DeaD (563 aa).

A Q motif motif is present at residues 13-41 (ATFADLQIHPRVLRAIGDVGYESPTAIQA). In terms of domain architecture, Helicase ATP-binding spans 44–215 (IPALMAGSDV…AKYLHDPFEV (172 aa)). Residue 57–64 (AQTGTGKT) coordinates ATP. Residues 163-166 (DEAD) carry the DEAD box motif. The region spanning 226–385 (NISQSYIQVA…AQLPTVEDVN (160 aa)) is the Helicase C-terminal domain. Disordered regions lie at residues 441–470 (LMAP…PDLT) and 543–563 (YRPP…KHVG). A compositionally biased stretch (basic and acidic residues) spans 451–461 (RNRDQRRDRPQ). Basic residues predominate over residues 551–563 (RHNGGKPRRKHVG).

The protein belongs to the DEAD box helicase family. DeaD/CsdA subfamily.

The protein localises to the cytoplasm. The catalysed reaction is ATP + H2O = ADP + phosphate + H(+). In terms of biological role, DEAD-box RNA helicase involved in various cellular processes at low temperature, including ribosome biogenesis, mRNA degradation and translation initiation. This Mycobacterium tuberculosis (strain CDC 1551 / Oshkosh) protein is ATP-dependent RNA helicase DeaD.